Consider the following 65-residue polypeptide: Large ribosomal subunit protein bL35 (65 aa).

This sequence belongs to the bacterial ribosomal protein bL35 family.

This chain is Large ribosomal subunit protein bL35, found in Caldicellulosiruptor bescii (strain ATCC BAA-1888 / DSM 6725 / KCTC 15123 / Z-1320) (Anaerocellum thermophilum).